Here is a 267-residue protein sequence, read N- to C-terminus: Membrane-associated protein Vipp1 (267 aa).

A coiled-coil region spans residues 26-156 (EKVLEQAVID…KANAELQQTL (131 aa)). The segment at 224–252 (GTSAATPQLEAAPVDSSVPANNASQDDAV) is disordered.

The protein belongs to the PspA/Vipp/IM30 family.

It is found in the cell inner membrane. Functionally, required for thylakoid formation. The protein is Membrane-associated protein Vipp1 of Synechocystis sp. (strain ATCC 27184 / PCC 6803 / Kazusa).